The primary structure comprises 439 residues: ATP-dependent protease ATPase subunit HslU (439 aa).

Residues Ile17, 59–64 (GVGKTE), Asp251, Glu317, and Arg389 each bind ATP.

It belongs to the ClpX chaperone family. HslU subfamily. A double ring-shaped homohexamer of HslV is capped on each side by a ring-shaped HslU homohexamer. The assembly of the HslU/HslV complex is dependent on binding of ATP.

The protein resides in the cytoplasm. In terms of biological role, ATPase subunit of a proteasome-like degradation complex; this subunit has chaperone activity. The binding of ATP and its subsequent hydrolysis by HslU are essential for unfolding of protein substrates subsequently hydrolyzed by HslV. HslU recognizes the N-terminal part of its protein substrates and unfolds these before they are guided to HslV for hydrolysis. This chain is ATP-dependent protease ATPase subunit HslU, found in Campylobacter jejuni subsp. jejuni serotype O:6 (strain 81116 / NCTC 11828).